The primary structure comprises 237 residues: Ribosomal RNA small subunit methyltransferase G (237 aa).

Residues glycine 76, phenylalanine 81, 128–129 (IE), and arginine 147 each bind S-adenosyl-L-methionine.

The protein belongs to the methyltransferase superfamily. RNA methyltransferase RsmG family.

It is found in the cytoplasm. Specifically methylates the N7 position of a guanine in 16S rRNA. This Prochlorococcus marinus (strain MIT 9301) protein is Ribosomal RNA small subunit methyltransferase G.